We begin with the raw amino-acid sequence, 124 residues long: Small ribosomal subunit protein bS16 (124 aa).

Residues Ala80–Glu124 form a disordered region. The segment covering Lys99 to Glu113 has biased composition (basic and acidic residues). Low complexity predominate over residues Ala114–Glu124.

It belongs to the bacterial ribosomal protein bS16 family.

The protein is Small ribosomal subunit protein bS16 of Rhizobium meliloti (strain 1021) (Ensifer meliloti).